Consider the following 248-residue polypeptide: MAPGAPSSSPSPILAALLFSSLVLSPVQAIVVYTDKEVHGAVGSQVTLYCSFWSSEWVSDDLSFTWRYQPEGGRDAISIFHYAKGQPYIDEVGTFKERIQWVGDPHRKDGSIVIHNLDYGDNGTFTCDVKNPPDIVGKTSQVTLYVFEKVPTRYGVVLGAVIGGVLGVVLLALLLFYLIRYCWLRRQAALQRRLSAMEKGKLHKTAKDASKRGRQTPVLYAMLDHSRSTKAASEKKTKGLGESRKDKK.

Residues 1–28 (MAPGAPSSSPSPILAALLFSSLVLSPVQ) form the signal peptide. Residues 29 to 155 (AIVVYTDKEV…VFEKVPTRYG (127 aa)) lie on the Extracellular side of the membrane. One can recognise an Ig-like V-type domain in the interval 30-143 (IVVYTDKEVH…DIVGKTSQVT (114 aa)). C50 and C127 are oxidised to a cystine. N-linked (GlcNAc...) (complex) asparagine glycosylation occurs at N122. The chain crosses the membrane as a helical span at residues 156-176 (VVLGAVIGGVLGVVLLALLLF). Residues 177-248 (YLIRYCWLRR…GLGESRKDKK (72 aa)) lie on the Cytoplasmic side of the membrane. Residue S210 is modified to Phosphoserine; by PKC. Residues 224–248 (DHSRSTKAASEKKTKGLGESRKDKK) form a disordered region. 2 positions are modified to phosphoserine: S226 and S228. A phosphoserine; by PKC mark is found at S233 and S243.

Belongs to the myelin P0 protein family. Homodimer and homotetramer. N-glycosylated; contains sulfate-substituted glycan. As to expression, found only in peripheral nervous system Schwann cells.

It is found in the cell membrane. In terms of biological role, is an adhesion molecule necessary for normal myelination in the peripheral nervous system. It mediates adhesion between adjacent myelin wraps and ultimately drives myelin compaction. This Bos taurus (Bovine) protein is Myelin protein P0 (MPZ).